The sequence spans 176 residues: Large ribosomal subunit protein bL17m (176 aa).

A mitochondrion-targeting transit peptide spans Met-1–Ala-8.

The protein belongs to the bacterial ribosomal protein bL17 family. Component of the mitochondrial ribosome large subunit (39S) which comprises a 16S rRNA and about 50 distinct proteins.

The protein localises to the mitochondrion. The protein is Large ribosomal subunit protein bL17m (Mrpl17) of Mus musculus (Mouse).